The chain runs to 215 residues: Large ribosomal subunit protein uL3 (215 aa).

A disordered region spans residues 124-164; sequence KRHGFSRGPMTHGSKNHREPGSTGAGTTPGRIYPGKRMAGR.

Belongs to the universal ribosomal protein uL3 family. Part of the 50S ribosomal subunit. Forms a cluster with proteins L14 and L19.

Its function is as follows. One of the primary rRNA binding proteins, it binds directly near the 3'-end of the 23S rRNA, where it nucleates assembly of the 50S subunit. The chain is Large ribosomal subunit protein uL3 from Synechococcus sp. (strain RCC307).